The sequence spans 574 residues: Proline--tRNA ligase (574 aa).

It belongs to the class-II aminoacyl-tRNA synthetase family. ProS type 1 subfamily. Homodimer.

The protein localises to the cytoplasm. The catalysed reaction is tRNA(Pro) + L-proline + ATP = L-prolyl-tRNA(Pro) + AMP + diphosphate. Catalyzes the attachment of proline to tRNA(Pro) in a two-step reaction: proline is first activated by ATP to form Pro-AMP and then transferred to the acceptor end of tRNA(Pro). As ProRS can inadvertently accommodate and process non-cognate amino acids such as alanine and cysteine, to avoid such errors it has two additional distinct editing activities against alanine. One activity is designated as 'pretransfer' editing and involves the tRNA(Pro)-independent hydrolysis of activated Ala-AMP. The other activity is designated 'posttransfer' editing and involves deacylation of mischarged Ala-tRNA(Pro). The misacylated Cys-tRNA(Pro) is not edited by ProRS. The polypeptide is Proline--tRNA ligase (Nitratidesulfovibrio vulgaris (strain DP4) (Desulfovibrio vulgaris)).